Reading from the N-terminus, the 690-residue chain is Elongation factor G (690 aa).

Residues 8 to 283 (EDYRNFGIMA…AVVDYLPSPV (276 aa)) enclose the tr-type G domain. GTP is bound by residues 17-24 (AHIDAGKT), 81-85 (DTPGH), and 135-138 (NKMD).

The protein belongs to the TRAFAC class translation factor GTPase superfamily. Classic translation factor GTPase family. EF-G/EF-2 subfamily.

The protein resides in the cytoplasm. Catalyzes the GTP-dependent ribosomal translocation step during translation elongation. During this step, the ribosome changes from the pre-translocational (PRE) to the post-translocational (POST) state as the newly formed A-site-bound peptidyl-tRNA and P-site-bound deacylated tRNA move to the P and E sites, respectively. Catalyzes the coordinated movement of the two tRNA molecules, the mRNA and conformational changes in the ribosome. The polypeptide is Elongation factor G (Rhodopseudomonas palustris (strain BisB5)).